The following is a 417-amino-acid chain: Diaminopimelate decarboxylase (417 aa).

Lys-61 is modified (N6-(pyridoxal phosphate)lysine). Residues Gly-240 and 275–278 (EPGR) contribute to the pyridoxal 5'-phosphate site. Substrate is bound by residues Arg-278, Arg-314, and Tyr-318. Cys-344 acts as the Proton donor in catalysis. The substrate site is built by Glu-345 and Tyr-372. Tyr-372 is a pyridoxal 5'-phosphate binding site.

The protein belongs to the Orn/Lys/Arg decarboxylase class-II family. LysA subfamily. Homodimer. It depends on pyridoxal 5'-phosphate as a cofactor.

It catalyses the reaction meso-2,6-diaminopimelate + H(+) = L-lysine + CO2. The protein operates within amino-acid biosynthesis; L-lysine biosynthesis via DAP pathway; L-lysine from DL-2,6-diaminopimelate: step 1/1. Its function is as follows. Specifically catalyzes the decarboxylation of meso-diaminopimelate (meso-DAP) to L-lysine. In Vibrio cholerae serotype O1 (strain ATCC 39315 / El Tor Inaba N16961), this protein is Diaminopimelate decarboxylase (lysA).